The primary structure comprises 619 residues: DNA mismatch repair protein MutL (619 aa).

Belongs to the DNA mismatch repair MutL/HexB family.

In terms of biological role, this protein is involved in the repair of mismatches in DNA. It is required for dam-dependent methyl-directed DNA mismatch repair. May act as a 'molecular matchmaker', a protein that promotes the formation of a stable complex between two or more DNA-binding proteins in an ATP-dependent manner without itself being part of a final effector complex. In Myxococcus xanthus (strain DK1622), this protein is DNA mismatch repair protein MutL.